A 30-amino-acid chain; its full sequence is Root cyclotide 1 (30 aa).

The segment at residues 1 to 30 (GIPCAESCVWIPCTVTALLGCSCSNKVCYN) is a cross-link (cyclopeptide (Gly-Asn)). Disulfide bonds link cysteine 4/cysteine 21, cysteine 8/cysteine 23, and cysteine 13/cysteine 28.

Post-translationally, this is a cyclic peptide. In terms of tissue distribution, expressed in roots.

Functionally, probably participates in a plant defense mechanism. This chain is Root cyclotide 1, found in Viola hederacea (Australian violet).